Reading from the N-terminus, the 424-residue chain is Inhibin beta A chain (424 aa).

Positions 1–20 (MPLLWLRGFLLASCWIIVRS) are cleaved as a signal peptide. Positions 21 to 308 (SPTPGSEGHG…EDHPHRRRRR (288 aa)) are excised as a propeptide. Asn165 carries an N-linked (GlcNAc...) asparagine glycan. Positions 264 to 275 (EVDGDGKKKDGS) are enriched in basic and acidic residues. The tract at residues 264 to 306 (EVDGDGKKKDGSDGGLEEEKEQSHRPFLMLQARQSEDHPHRRR) is disordered. 4 disulfides stabilise this stretch: Cys312/Cys320, Cys319/Cys389, Cys348/Cys421, and Cys352/Cys423.

Belongs to the TGF-beta family. In terms of assembly, dimeric, linked by one or more disulfide bonds. Inhibin A is a dimer of alpha/INHA and beta-A/INHBA. Activin A is a homodimer of beta-A/INHBA. Activin AB is a dimer of beta-A/INHBA and beta-B/INHBB. Interacts with FST and FSTL3; these interactions prevent activin A interaction to its type II receptor. Activin A interacts with ACVR2A. Activin A interacts with BMPR2. Inhibin A interacts with ACVR1; this interaction creates a non-signaling complex (NSC) that inhibits ACVR1-mediated BMP signaling. Inhibin A interacts with ACVR2A.

It localises to the secreted. Functionally, inhibins/activins are involved in regulating a number of diverse functions such as hypothalamic and pituitary hormone secretion, gonadal hormone secretion, germ cell development and maturation, erythroid differentiation, insulin secretion, nerve cell survival, embryonic axial development or bone growth, depending on their subunit composition. Activin A is a homodimer of INHBA that plays a role in several essential biological processes including embryonic development, stem cell maintenance and differentiation, haematopoiesis, cell proliferation and tissue fibrosis. Signals through type I (such as ACVR1B or ACVR1C) and type II receptors (such as ACVR2A, ACVR2B or BMPR2) which, upon ligand binding, phosphorylate SMAD2 and SMAD3 intracellular signaling mediators that form a complex with SMAD4, translocate to the nucleus and modulate gene expression. Can also activate alternative non-canonical intracellular signaling pathways including the p38 MAPK, extracellular signal-regulated kinases 1/2 (ERK1/2) and c-Jun N-terminal kinases (JNKs) to modulate cell migration and differentiation. Alternatively, promotes osteoblastic differentiation via ACVRL1-SMAD1/5/9 pathway. In addition, can engage the type I receptor ACVR1 to form an ACVR1-activin A-type II receptor non-signaling complex (NSC) that renders receptors unavailable for engagement with BMPs, hence resulting in an apparent inhibition of ACVR1-mediated BMP signaling. In terms of biological role, inhibin A is a dimer of alpha/INHA and beta-A/INHBA that functions as a feedback regulator in the hypothalamic-pituitary-gonadal (HPG) axis. Inhibits the secretion of FSH from the anterior pituitary gland by acting on pituitary gonadotrope cells. Antagonizes activin A by binding to the proteoglycan, betaglycan, and forming a stable complex with and, thereby, sequestering type II activin receptors while excluding type I receptor. This Rattus norvegicus (Rat) protein is Inhibin beta A chain (Inhba).